Reading from the N-terminus, the 330-residue chain is Atypical chemokine receptor 1 (330 aa).

Residues 1 to 57 lie on the Extracellular side of the membrane; sequence MGNCLYPVADDNSTKLAIKEDFLIDFPEDYYPDYNETDVEAAAPCHSCSLLNYSSLP. Asparagine 12, asparagine 35, and asparagine 52 each carry an N-linked (GlcNAc...) asparagine glycan. Intrachain disulfides connect cysteine 45-cysteine 270 and cysteine 123-cysteine 189. Residues 58–78 form a helical membrane-spanning segment; the sequence is FFILVSILGILASGTILYALL. At 79 to 89 the chain is on the cytoplasmic side; that stretch reads RPLFRWQLYQD. A helical membrane pass occupies residues 90-110; it reads RSTLVQLAVGSALFSIVVPIL. At 111–123 the chain is on the extracellular side; that stretch reads ARGLSGALITSLC. A helical membrane pass occupies residues 124-147; sequence HLAHLVAYGSAFAQALLIGYHACL. Residues 148-160 are Cytoplasmic-facing; the sequence is GPQLGAGQVPGLR. Residues 161–181 traverse the membrane as a helical segment; it reads LGVTVGLWGVAALLSLPVVLG. Residues 182 to 201 are Extracellular-facing; that stretch reads SDTSQGLCTVTFSGEWETLR. A helical transmembrane segment spans residues 202–222; that stretch reads YIHAAACFAIFVLLPLGLLGT. Over 223 to 238 the chain is Cytoplasmic; the sequence is KGLKTVLGRAPCPWVD. Residues 239–259 form a helical membrane-spanning segment; it reads VLWVWFIFWWPQGMTLGLDSL. Residues 260 to 281 are Extracellular-facing; the sequence is VRSKAIVVSTCPAQQALDMLLD. Residues 282–302 traverse the membrane as a helical segment; it reads VAEALAILHCVATPLLLAWVC. The Cytoplasmic segment spans residues 303 to 330; sequence YQATHTSPPSLPLPTTQTSHLDTLGGKS.

Belongs to the G-protein coupled receptor 1 family. Atypical chemokine receptor subfamily.

The protein resides in the early endosome. Its subcellular location is the recycling endosome. It localises to the membrane. In terms of biological role, atypical chemokine receptor that controls chemokine levels and localization via high-affinity chemokine binding that is uncoupled from classic ligand-driven signal transduction cascades, resulting instead in chemokine sequestration, degradation, or transcytosis. Also known as interceptor (internalizing receptor) or chemokine-scavenging receptor or chemokine decoy receptor. Has a promiscuous chemokine-binding profile, interacting with inflammatory chemokines of both the CXC and the CC subfamilies but not with homeostatic chemokines. Acts as a receptor for chemokines including CCL2, CCL5, CCL7, CCL11, CCL13, CCL14, CCL17, CXCL5, CXCL6, IL8/CXCL8, CXCL11, GRO, RANTES, MCP-1 and TARC. May regulate chemokine bioavailability and, consequently, leukocyte recruitment through two distinct mechanisms: when expressed in endothelial cells, it sustains the abluminal to luminal transcytosis of tissue-derived chemokines and their subsequent presentation to circulating leukocytes; when expressed in erythrocytes, serves as blood reservoir of cognate chemokines but also as a chemokine sink, buffering potential surges in plasma chemokine levels. The sequence is that of Atypical chemokine receptor 1 (ACKR1) from Bos taurus (Bovine).